A 46-amino-acid chain; its full sequence is U-limacoditoxin(6)-Dv61 (46 aa).

Residues 1 to 19 (MSKLLVLLMTTALATLAQA) form the signal peptide.

This sequence belongs to the limacoditoxin-6 family. Expressed by the venom secretory cell of the spine. The spine is a cuticular structure containing a single large nucleated venom-secreting cell at its base. It is an independent unit capable of producing, storing and injecting venom. On the back of D.vulnerans caterpillars, spines are grouped together by 50 to 100 to form scoli, of which there are eight in D.vulnerans.

It localises to the secreted. Its function is as follows. Probable toxin. Does not show insecticidal, antimicrobial and antiparasitic activities. Does not induce increase in intracellular calcium in mouse DRG neurons, suggesting that it does not induce pain. The protein is U-limacoditoxin(6)-Dv61 of Doratifera vulnerans (Mottled cup moth).